A 461-amino-acid chain; its full sequence is MKNTSSSTTLTMNDTIAAIATPLGKGAISIIKISGHNALNILKQLTQKQDFTPRYAYVHDIFSNGVLLDKALVIYFKAPYSFTGEDVCEIQCHGSPLLAQNILQACLNLGARLAKAGEFSKKAFLNHKMDLSEIEASVQLILCEDESVLNALARQLKGELKIFIEEARGNLLKLLASSEVLIDYSEEDIPSDFLDGVSLNLEKQIASFKDLLDFSNAQKQRNKGHALSIVGKPNAGKSSLLNAMLLEERALVSDIKGTTRDTIEEVIELKGHKVRLIDTAGIRESADKIERLGIEKSLKSLENCDIILGVFDLSKPLEKEDFNLIDTLNRAKKPCIVVLNKNDLAPKLELEILKSYLKIPYTLLETNTLNSKACLKDLSQKISAFFPKLDTQNKLLLTSLAQKIALENAITELQNAKNHLETLELFSYHILSAIENLNLLTRPYETSQMLDSMFSEFCLGK.

Positions 32, 89, and 128 each coordinate (6S)-5-formyl-5,6,7,8-tetrahydrofolate. The region spanning 224-387 (GHALSIVGKP…LSQKISAFFP (164 aa)) is the TrmE-type G domain. Asparagine 234 is a binding site for K(+). GTP-binding positions include 234-239 (NAGKSS), 253-259 (SDIKGTT), and 278-281 (DTAG). Serine 238 provides a ligand contact to Mg(2+). Residues serine 253, isoleucine 255, and threonine 258 each contribute to the K(+) site. Threonine 259 is a binding site for Mg(2+). Lysine 461 contributes to the (6S)-5-formyl-5,6,7,8-tetrahydrofolate binding site.

Belongs to the TRAFAC class TrmE-Era-EngA-EngB-Septin-like GTPase superfamily. TrmE GTPase family. Homodimer. Heterotetramer of two MnmE and two MnmG subunits. K(+) is required as a cofactor.

It localises to the cytoplasm. Functionally, exhibits a very high intrinsic GTPase hydrolysis rate. Involved in the addition of a carboxymethylaminomethyl (cmnm) group at the wobble position (U34) of certain tRNAs, forming tRNA-cmnm(5)s(2)U34. The protein is tRNA modification GTPase MnmE of Helicobacter pylori (strain ATCC 700392 / 26695) (Campylobacter pylori).